The chain runs to 235 residues: Small ribosomal subunit protein eS4 (235 aa).

In terms of domain architecture, S4 RNA-binding spans 38-101 (IPLLVLVRDF…EKSYRILFDE (64 aa)).

The protein belongs to the eukaryotic ribosomal protein eS4 family.

The protein is Small ribosomal subunit protein eS4 (rps4e) of Archaeoglobus fulgidus (strain ATCC 49558 / DSM 4304 / JCM 9628 / NBRC 100126 / VC-16).